Here is a 343-residue protein sequence, read N- to C-terminus: MTETADLWPQLLGQLLERQSLSEAQAEQLMNGWLHNQVPDVVSGAILAALQAKGVSASELAGMARVLQRASLGSPLDLPLLVDTCGTGGDGAGTFNISTAVAFVVSAAGIPVVKHGNRSASGKVGSADVLEALGVNLSAEPEQVRAAVAEVGITFLFAPHWHPAMRAVIPYRRALKVRTVFNLLGPLVNPLYPNRQVIGVYAPELVPVMAEALRLLGRERAVVLHSREGLDEAGLDQPTDLGILSGGLVRTEVLNPRDYDLTPAPVQALQGGNLAENAAILAQVLQGSGAPAQRDVVALNAALALQVAGAVPDWGSGIAQAREILASGAAWDRLQKLVNFLAS.

5-phospho-alpha-D-ribose 1-diphosphate is bound by residues glycine 86, 89 to 90 (GD), threonine 94, 96 to 99 (NIST), 114 to 122 (KHGNRSASG), and serine 126. Glycine 86 provides a ligand contact to anthranilate. Mg(2+) is bound at residue serine 98. Residue asparagine 117 participates in anthranilate binding. Arginine 172 lines the anthranilate pocket. Aspartate 231 and glutamate 232 together coordinate Mg(2+).

The protein belongs to the anthranilate phosphoribosyltransferase family. In terms of assembly, homodimer. It depends on Mg(2+) as a cofactor.

It catalyses the reaction N-(5-phospho-beta-D-ribosyl)anthranilate + diphosphate = 5-phospho-alpha-D-ribose 1-diphosphate + anthranilate. The protein operates within amino-acid biosynthesis; L-tryptophan biosynthesis; L-tryptophan from chorismate: step 2/5. Functionally, catalyzes the transfer of the phosphoribosyl group of 5-phosphorylribose-1-pyrophosphate (PRPP) to anthranilate to yield N-(5'-phosphoribosyl)-anthranilate (PRA). The protein is Anthranilate phosphoribosyltransferase of Synechococcus sp. (strain JA-3-3Ab) (Cyanobacteria bacterium Yellowstone A-Prime).